The following is a 530-amino-acid chain: Bifunctional purine biosynthesis protein PurH (530 aa).

Residues 1 to 148 (MNNARPIRRA…KNHKDVTIVV (148 aa)) form the MGS-like domain.

It belongs to the PurH family.

The catalysed reaction is (6R)-10-formyltetrahydrofolate + 5-amino-1-(5-phospho-beta-D-ribosyl)imidazole-4-carboxamide = 5-formamido-1-(5-phospho-D-ribosyl)imidazole-4-carboxamide + (6S)-5,6,7,8-tetrahydrofolate. It carries out the reaction IMP + H2O = 5-formamido-1-(5-phospho-D-ribosyl)imidazole-4-carboxamide. Its pathway is purine metabolism; IMP biosynthesis via de novo pathway; 5-formamido-1-(5-phospho-D-ribosyl)imidazole-4-carboxamide from 5-amino-1-(5-phospho-D-ribosyl)imidazole-4-carboxamide (10-formyl THF route): step 1/1. It participates in purine metabolism; IMP biosynthesis via de novo pathway; IMP from 5-formamido-1-(5-phospho-D-ribosyl)imidazole-4-carboxamide: step 1/1. The chain is Bifunctional purine biosynthesis protein PurH from Vibrio campbellii (strain ATCC BAA-1116).